We begin with the raw amino-acid sequence, 89 residues long: Elongation factor 1-beta (89 aa).

Belongs to the EF-1-beta/EF-1-delta family.

Its function is as follows. Promotes the exchange of GDP for GTP in EF-1-alpha/GDP, thus allowing the regeneration of EF-1-alpha/GTP that could then be used to form the ternary complex EF-1-alpha/GTP/AAtRNA. The polypeptide is Elongation factor 1-beta (Methanococcus aeolicus (strain ATCC BAA-1280 / DSM 17508 / OCM 812 / Nankai-3)).